Reading from the N-terminus, the 508-residue chain is MFSLQDLCRKNLFTPLEPLGKHVVQRLGLYWEGHGSLKRMGHCFVCVDQIHILSINLAIKIAAAEGNEEIVKLLLLWGGNLHYAIIGALESRQYELILIYENQIGDWHDILSLIRDPVIYERCHELNVTCTFQCLFQHAIRHNMVSILQKYREDLANNRRMIQLLYEMACRLQNYDIITWIARNWHVFNIEAIFSIAFIRKDLTLYSLGYMFLLDRMSIEDRNFKSIITRHLEYAAKKGLFDFVLESLKYGGQVDTVLFQAVKYNHRKILAYFIHETPRKTVEKLLLHAVESRASKKTMNLLLSSLNYSIHSIIKKLLYAVVKHKYMLVIKLLLERPKKKINLVDAVLYRLVKHSTNAEIVKFMNEFSVSPERVIKVAARLMRVDLIKNISKDVWENKLERIKHLKQIVYTMKHRNGKNLLMYNIYNITGYTYMNIKEAFNLTKFYAVHNATCLFKEMCKNCFVHDLIQLRELLEDCLHIANKHAYIQIAEAANEYIKYIDDIYISLK.

ANK repeat units lie at residues 54-83 (SINL…NLHY), 253-282 (QVDT…RKTV), and 313-343 (IIKK…KINL).

This sequence belongs to the asfivirus MGF 505 family.

Its function is as follows. Plays a role in virus cell tropism, and may be required for efficient virus replication in macrophages. This is Protein MGF 505-9R from Ornithodoros (relapsing fever ticks).